The following is a 296-amino-acid chain: MNINEIRKERQKWMQWKNIAPLREVIEHLGDVTCSVELGDVVTIKGKPLKNIEDTARLMMPWRKGPFEVFGTYIDSEWRSNIKYNLLRKHFNLKDRRVADIGCNNGYYLFRMQEDAPKLLVGFDPSPLFKTQFDFINRFVKSDIVYELLGVEHLEFYEDKFDTIFCLGVLYHRSDPVSMLKSLYKGLDKEGEVILDTFYIEGDEEICLSPASSYSKIPNIYFVPTISALKNWCLRAGFSSFEVLETSLTSSDEQRKTSWIEGESLEDFLDKNDNTKTVEGYPAPSRVYVRLKKGIK.

Carboxy-S-adenosyl-L-methionine is bound by residues Lys64, Trp78, Lys83, Gly102, 124–126, 151–152, Tyr171, and Arg286; these read DPS and VE.

Belongs to the class I-like SAM-binding methyltransferase superfamily. CmoB family. As to quaternary structure, homotetramer.

It carries out the reaction carboxy-S-adenosyl-L-methionine + 5-hydroxyuridine(34) in tRNA = 5-carboxymethoxyuridine(34) in tRNA + S-adenosyl-L-homocysteine + H(+). Functionally, catalyzes carboxymethyl transfer from carboxy-S-adenosyl-L-methionine (Cx-SAM) to 5-hydroxyuridine (ho5U) to form 5-carboxymethoxyuridine (cmo5U) at position 34 in tRNAs. The sequence is that of tRNA U34 carboxymethyltransferase from Sulfurimonas denitrificans (strain ATCC 33889 / DSM 1251) (Thiomicrospira denitrificans (strain ATCC 33889 / DSM 1251)).